Here is a 921-residue protein sequence, read N- to C-terminus: Sodium/calcium exchanger 2 (921 aa).

The signal sequence occupies residues 1–20 (MAPLALVGVALLLGAPHCLG). Over 21-68 (EATPTPSLPPPPANDSDASPGGCQGSYRCQPGVLLPVWEPDDPSLGDK) the chain is Extracellular. The segment at 23–42 (TPTPSLPPPPANDSDASPGG) is disordered. Residue Asn-34 is glycosylated (N-linked (GlcNAc...) asparagine). A helical transmembrane segment spans residues 69 to 90 (AARAVVYFVAMVYMFLGLSIIA). The Cytoplasmic portion of the chain corresponds to 91 to 130 (DRFMASIEVITSKEKEITITKANGETSVGTVRIWNETVSN). Residues 131-152 (LTLMALGSSAPEILLSVIEVCG) traverse the membrane as a helical segment. Residues 135 to 175 (ALGSSAPEILLSVIEVCGHNFQAGELGPGTIVGSAAFNMFV) form an Alpha-1 repeat. At 153 to 164 (HNFQAGELGPGT) the chain is on the extracellular side. Residues 165–185 (IVGSAAFNMFVVIAVCVYVIP) traverse the membrane as a helical segment. Topologically, residues 186–196 (AGESRKIKHLR) are cytoplasmic. A helical transmembrane segment spans residues 197–219 (VFFVTASWSIFAYVWLYLILAVF). The Extracellular portion of the chain corresponds to 220-222 (SPG). A helical membrane pass occupies residues 223 to 246 (VVQVWEALLTLVFFPVCVVFAWMA). Over 247 to 720 (DKRLLFYKYV…DGSREERLPS (474 aa)) the chain is Cytoplasmic. The putative calmodulin-binding region stretch occupies residues 248–267 (KRLLFYKYVYKRYRTDPRSG). The segment at 372–391 (AADAARRPGANDGAPDDEDD) is disordered. 2 consecutive Calx-beta domains span residues 384 to 483 (GAPD…VRLL) and 512 to 612 (ATVT…IELG). Glu-407, Asp-443, Asp-468, Asp-469, Ile-471, Glu-473, Glu-476, Asp-518, Asp-519, Asp-520, Glu-536, Asp-598, Glu-599, and Glu-600 together coordinate Ca(2+). Ser-622 bears the Phosphoserine mark. Ca(2+) is bound at residue Glu-665. The chain crosses the membrane as a helical span at residues 721–740 (CFDYVMHFLTVFWKVLFACL). Residues 741–747 (PPTEYCH) lie on the Extracellular side of the membrane. Residues 748–770 (GWACFGVCILVIGLLTALIGDLA) traverse the membrane as a helical segment. Topologically, residues 771-772 (SH) are cytoplasmic. A helical transmembrane segment spans residues 773 to 791 (FGCTVGLKDSVNAVVFVAL). The Alpha-2 repeat unit spans residues 790–826 (ALGTSIPDTFASKVAALQDQCADASIGNVTGSNAVNV). Residues 792–822 (GTSIPDTFASKVAALQDQCADASIGNVTGSN) are Extracellular-facing. N-linked (GlcNAc...) asparagine glycosylation occurs at Asn-817. The chain crosses the membrane as a helical span at residues 823–843 (AVNVFLGLGVAWSVAAVYWAV). Topologically, residues 844-854 (QGRPFEVRTGT) are cytoplasmic. Residues 855-875 (LAFSVTLFTVFAFVGIAVLLY) traverse the membrane as a helical segment. Topologically, residues 876–892 (RRRPHIGGELGGPRGPK) are extracellular. Residues 893–909 (LATTALFLGLWFLYILF) form a helical membrane-spanning segment. The Cytoplasmic segment spans residues 910–921 (ASLEAYCHIRGF).

It belongs to the Ca(2+):cation antiporter (CaCA) (TC 2.A.19) family. SLC8 subfamily. As to expression, detected in neocortex and hippocampus on pyramidal cells, astrocyte processes and dendrites (at protein level). Brain and skeletal muscle.

It localises to the cell membrane. It is found in the basolateral cell membrane. The protein resides in the perikaryon. Its subcellular location is the cell projection. The protein localises to the dendrite. It localises to the dendritic spine. It catalyses the reaction Ca(2+)(in) + 3 Na(+)(out) = Ca(2+)(out) + 3 Na(+)(in). With respect to regulation, calcium transport is down-regulated by Na(+) and stimulated by Ca(2+). Its function is as follows. Mediates the electrogenic exchange of Ca(2+) against Na(+) ions across the cell membrane, and thereby contributes to the regulation of cytoplasmic Ca(2+) levels and Ca(2+)-dependent cellular processes. Contributes to cellular Ca(2+) homeostasis in excitable cells. Contributes to the rapid decrease of cytoplasmic Ca(2+) levels back to baseline after neuronal activation, and thereby contributes to modulate synaptic plasticity, learning and memory. Plays a role in regulating urinary Ca(2+) and Na(+) excretion. The sequence is that of Sodium/calcium exchanger 2 (Slc8a2) from Rattus norvegicus (Rat).